Here is a 227-residue protein sequence, read N- to C-terminus: Guanylate kinase (227 aa).

The region spanning 21–199 is the Guanylate kinase-like domain; it reads GNLFMVVAPS…ALAELECIVA (179 aa). 28-35 contributes to the ATP binding site; that stretch reads APSGAGKS.

Belongs to the guanylate kinase family.

The protein resides in the cytoplasm. The enzyme catalyses GMP + ATP = GDP + ADP. Essential for recycling GMP and indirectly, cGMP. The polypeptide is Guanylate kinase (Burkholderia lata (strain ATCC 17760 / DSM 23089 / LMG 22485 / NCIMB 9086 / R18194 / 383)).